The following is a 274-amino-acid chain: Cytochrome b-c1 complex subunit Rieske, mitochondrial (274 aa).

The Mitochondrial matrix portion of the chain corresponds to 79 to 103; that stretch reads SHTDVKVPDFSEYRRPEVLDSTKSS. A helical transmembrane segment spans residues 104 to 140; the sequence is RESSEARKGFSYLVTAVTTVGVAYAAKNAVTQFVSSM. Residues 141–274 are Mitochondrial intermembrane-facing; the sequence is SASADVLALA…FTSDDMVIVG (134 aa). Residues 187-272 enclose the Rieske domain; the sequence is EAAVELSQLR…YEFTSDDMVI (86 aa). [2Fe-2S] cluster contacts are provided by cysteine 217, histidine 219, cysteine 236, histidine 239, and serine 241. Cysteines 222 and 238 form a disulfide.

Belongs to the Rieske iron-sulfur protein family. In terms of assembly, component of the ubiquinol-cytochrome c oxidoreductase (cytochrome b-c1 complex, complex III, CIII), a multisubunit enzyme composed of 11 subunits. The complex is composed of 3 respiratory subunits cytochrome b, cytochrome c1 and Rieske protein UQCRFS1, 2 core protein subunits UQCRC1/QCR1 and UQCRC2/QCR2, and 6 low-molecular weight protein subunits UQCRH/QCR6, UQCRB/QCR7, UQCRQ/QCR8, UQCR10/QCR9, UQCR11/QCR10 and subunit 9, the cleavage product of Rieske protein UQCRFS1. The complex exists as an obligatory dimer and forms supercomplexes (SCs) in the inner mitochondrial membrane with NADH-ubiquinone oxidoreductase (complex I, CI) and cytochrome c oxidase (complex IV, CIV), resulting in different assemblies (supercomplex SCI(1)III(2)IV(1) and megacomplex MCI(2)III(2)IV(2)). Incorporation of the Rieske protein UQCRFS1 is the penultimate step in complex III assembly. Interacts with TTC19, which is involved in the clearance of UQCRFS1 fragments. Component of the ubiquinol-cytochrome c oxidoreductase (cytochrome b-c1 complex, complex III, CIII). Subunit 9 corresponds to the mitochondrial targeting sequence (MTS) of Rieske protein UQCRFS1. It is retained after processing and incorporated inside complex III, where it remains bound to the complex and localizes between the 2 core subunits UQCRC1/QCR1 and UQCRC2/QCR2. [2Fe-2S] cluster serves as cofactor. Post-translationally, proteolytic processing is necessary for the correct insertion of UQCRFS1 in the complex III dimer. Several fragments are generated during UQCRFS1 insertion, most probably due to the endogenous matrix-processing peptidase (MPP) activity of the 2 core protein subunits UQCRC1/QCR1 and UQCRC2/QCR2, which are homologous to the 2 mitochondrial-processing peptidase (MPP) subunits beta-MPP and alpha-MPP respectively. The action of the protease is also necessary for the clearance of the UQCRFS1 fragments.

It is found in the mitochondrion inner membrane. It catalyses the reaction a quinol + 2 Fe(III)-[cytochrome c](out) = a quinone + 2 Fe(II)-[cytochrome c](out) + 2 H(+)(out). In terms of biological role, component of the ubiquinol-cytochrome c oxidoreductase, a multisubunit transmembrane complex that is part of the mitochondrial electron transport chain which drives oxidative phosphorylation. The respiratory chain contains 3 multisubunit complexes succinate dehydrogenase (complex II, CII), ubiquinol-cytochrome c oxidoreductase (cytochrome b-c1 complex, complex III, CIII) and cytochrome c oxidase (complex IV, CIV), that cooperate to transfer electrons derived from NADH and succinate to molecular oxygen, creating an electrochemical gradient over the inner membrane that drives transmembrane transport and the ATP synthase. The cytochrome b-c1 complex catalyzes electron transfer from ubiquinol to cytochrome c, linking this redox reaction to translocation of protons across the mitochondrial inner membrane, with protons being carried across the membrane as hydrogens on the quinol. In the process called Q cycle, 2 protons are consumed from the matrix, 4 protons are released into the intermembrane space and 2 electrons are passed to cytochrome c. The Rieske protein is a catalytic core subunit containing a [2Fe-2S] iron-sulfur cluster. It cycles between 2 conformational states during catalysis to transfer electrons from the quinol bound in the Q(0) site in cytochrome b to cytochrome c1. Incorporation of UQCRFS1 is the penultimate step in complex III assembly. Its function is as follows. Component of the ubiquinol-cytochrome c oxidoreductase (cytochrome b-c1 complex, complex III, CIII). UQCRFS1 undergoes proteolytic processing once it is incorporated in the complex III dimer. One of the fragments, called subunit 9, corresponds to its mitochondrial targeting sequence (MTS). The proteolytic processing is necessary for the correct insertion of UQCRFS1 in the complex III dimer, but the persistence of UQCRFS1-derived fragments may prevent newly imported UQCRFS1 to be processed and assembled into complex III and is detrimental for the complex III structure and function. This chain is Cytochrome b-c1 complex subunit Rieske, mitochondrial (UQCRFS1), found in Symphalangus syndactylus (Siamang).